The chain runs to 373 residues: mRNA export factor rae-1 (373 aa).

Residue M1 is modified to N-acetylmethionine. WD repeat units lie at residues 40–82, 87–126, 128–169, and 276–315; these read APED…TFEG, NIPAPILDIAWIEDSSKIFIACADKEARLWDLASNQVAVV, THDG…NQTQ, and QEIYAVNDICFHPQHGTLVTIGSDGRYSMWDKDARTKLKT.

The protein belongs to the WD repeat rae1 family. In terms of assembly, the nuclear pore complex (NPC) constitutes the exclusive means of nucleocytoplasmic transport. NPCs allow the passive diffusion of ions and small molecules and the active, nuclear transport receptor-mediated bidirectional transport of macromolecules such as proteins, RNAs, ribonucleoparticles (RNPs), and ribosomal subunits across the nuclear envelope. Interacts with rpm-1. As to expression, expressed along the ventral and dorsal nerve cords.

The protein localises to the nucleus. It is found in the nuclear pore complex. It localises to the cell projection. The protein resides in the axon. Its subcellular location is the synapse. In terms of biological role, functions as a component of the nuclear pore complex (NPC). NPC components, collectively referred to as nucleoporins (NUPs), can play the role of both NPC structural components and of docking or interaction partners for transiently associated nuclear transport factors. It is specifically important for nuclear mRNA export. Has a role in neuronal development, where it acts downstream of rpm-1 to control axon termination and synapse formation in anterior lateral microtubule (ALM) and posterior lateral microtubule (PLM) mechanosensory neurons. In Caenorhabditis elegans, this protein is mRNA export factor rae-1.